The primary structure comprises 364 residues: Solute carrier family 35 member C2 (364 aa).

Transmembrane regions (helical) follow at residues Ala-14–Tyr-34 and Phe-42–Leu-62. Asn-102 carries an N-linked (GlcNAc...) asparagine glycan. 7 helical membrane passes run Ser-104–Ile-124, Leu-136–Tyr-156, Phe-166–Leu-186, Phe-202–Leu-222, Leu-238–Phe-258, Leu-272–Gly-292, and Ile-295–Ala-315. Phosphoserine is present on residues Ser-335 and Ser-336.

Belongs to the TPT transporter family. SLC35C subfamily.

Its subcellular location is the golgi apparatus. It is found in the cis-Golgi network membrane. The protein localises to the endoplasmic reticulum-Golgi intermediate compartment membrane. In terms of biological role, may play an important role in the cellular response to tissue hypoxia. May be either a GDP-fucose transporter that competes with SLC35C1 for GDP-fucose, or a factor that otherwise enhances the fucosylation of Notch and is required for optimal Notch signaling in mammalian cells. This is Solute carrier family 35 member C2 (Slc35c2) from Mus musculus (Mouse).